Consider the following 430-residue polypeptide: tRNA(Ile)-lysidine synthase (430 aa).

27 to 32 is an ATP binding site; that stretch reads SGGSDS.

This sequence belongs to the tRNA(Ile)-lysidine synthase family.

Its subcellular location is the cytoplasm. The catalysed reaction is cytidine(34) in tRNA(Ile2) + L-lysine + ATP = lysidine(34) in tRNA(Ile2) + AMP + diphosphate + H(+). Ligates lysine onto the cytidine present at position 34 of the AUA codon-specific tRNA(Ile) that contains the anticodon CAU, in an ATP-dependent manner. Cytidine is converted to lysidine, thus changing the amino acid specificity of the tRNA from methionine to isoleucine. In Rickettsia typhi (strain ATCC VR-144 / Wilmington), this protein is tRNA(Ile)-lysidine synthase.